The chain runs to 256 residues: Leucyl/phenylalanyl-tRNA--protein transferase (256 aa).

Residues 1 to 21 (MIPWLPDDSDSAPFPPTRLAL) form a disordered region.

The protein belongs to the L/F-transferase family.

The protein localises to the cytoplasm. The catalysed reaction is N-terminal L-lysyl-[protein] + L-leucyl-tRNA(Leu) = N-terminal L-leucyl-L-lysyl-[protein] + tRNA(Leu) + H(+). It carries out the reaction N-terminal L-arginyl-[protein] + L-leucyl-tRNA(Leu) = N-terminal L-leucyl-L-arginyl-[protein] + tRNA(Leu) + H(+). It catalyses the reaction L-phenylalanyl-tRNA(Phe) + an N-terminal L-alpha-aminoacyl-[protein] = an N-terminal L-phenylalanyl-L-alpha-aminoacyl-[protein] + tRNA(Phe). Its function is as follows. Functions in the N-end rule pathway of protein degradation where it conjugates Leu, Phe and, less efficiently, Met from aminoacyl-tRNAs to the N-termini of proteins containing an N-terminal arginine or lysine. This Leptothrix cholodnii (strain ATCC 51168 / LMG 8142 / SP-6) (Leptothrix discophora (strain SP-6)) protein is Leucyl/phenylalanyl-tRNA--protein transferase.